A 201-amino-acid polypeptide reads, in one-letter code: 3-isopropylmalate dehydratase small subunit (201 aa).

This sequence belongs to the LeuD family. LeuD type 1 subfamily. Heterodimer of LeuC and LeuD.

It carries out the reaction (2R,3S)-3-isopropylmalate = (2S)-2-isopropylmalate. Its pathway is amino-acid biosynthesis; L-leucine biosynthesis; L-leucine from 3-methyl-2-oxobutanoate: step 2/4. Its function is as follows. Catalyzes the isomerization between 2-isopropylmalate and 3-isopropylmalate, via the formation of 2-isopropylmaleate. The chain is 3-isopropylmalate dehydratase small subunit from Shigella boydii serotype 18 (strain CDC 3083-94 / BS512).